Consider the following 261-residue polypeptide: Hemin import ATP-binding protein HmuV (261 aa).

In terms of domain architecture, ABC transporter spans 7–243 (LRGQNLSLQF…EIIDAVYGYK (237 aa)). 39-46 (GPNGAGKS) contacts ATP.

This sequence belongs to the ABC transporter superfamily. Heme (hemin) importer (TC 3.A.1.14.5) family. In terms of assembly, the complex is composed of two ATP-binding proteins (HmuV), two transmembrane proteins (HmuU) and a solute-binding protein (HmuT).

It is found in the cell inner membrane. Part of the ABC transporter complex HmuTUV involved in hemin import. Responsible for energy coupling to the transport system. The chain is Hemin import ATP-binding protein HmuV from Vibrio vulnificus (strain YJ016).